We begin with the raw amino-acid sequence, 565 residues long: NAD-dependent malic enzyme (565 aa).

The Proton donor role is filled by Tyr104. Arg157 lines the NAD(+) pocket. Lys175 serves as the catalytic Proton acceptor. Residues Glu246, Asp247, and Asp270 each contribute to the a divalent metal cation site. NAD(+) is bound by residues Asp270 and Asn418.

This sequence belongs to the malic enzymes family. As to quaternary structure, homotetramer. The cofactor is Mg(2+). It depends on Mn(2+) as a cofactor.

The catalysed reaction is (S)-malate + NAD(+) = pyruvate + CO2 + NADH. The enzyme catalyses oxaloacetate + H(+) = pyruvate + CO2. The polypeptide is NAD-dependent malic enzyme (Salmonella arizonae (strain ATCC BAA-731 / CDC346-86 / RSK2980)).